The following is a 511-amino-acid chain: Lysine--tRNA ligase (511 aa).

Residues 1–21 (MHTEKDPNKNTPEQQTPISLN) are disordered. A compositionally biased stretch (polar residues) spans 9 to 21 (KNTPEQQTPISLN). Glu-422 and Glu-429 together coordinate Mg(2+).

Belongs to the class-II aminoacyl-tRNA synthetase family. In terms of assembly, homodimer. Requires Mg(2+) as cofactor.

It is found in the cytoplasm. It catalyses the reaction tRNA(Lys) + L-lysine + ATP = L-lysyl-tRNA(Lys) + AMP + diphosphate. In Pelodictyon phaeoclathratiforme (strain DSM 5477 / BU-1), this protein is Lysine--tRNA ligase.